A 510-amino-acid polypeptide reads, in one-letter code: Cytochrome P450 monooxygenase ptmK (510 aa).

Residues 2 to 22 (IIVTFFWVGIVLSAIWTFYKV) form a helical membrane-spanning segment. N-linked (GlcNAc...) asparagine glycans are attached at residues N313, N408, and N443. A heme-binding site is contributed by C456.

It belongs to the cytochrome P450 family. Requires heme as cofactor.

The protein localises to the membrane. It participates in secondary metabolite biosynthesis. Cytochrome P450 monooxygenase; part of the gene cluster that mediates the biosynthesis of the indole diterpenes penitrems. The geranylgeranyl diphosphate (GGPP) synthase ptmG catalyzes the first step in penitrem biosynthesis via conversion of farnesyl pyrophosphate and isopentyl pyrophosphate into geranylgeranyl pyrophosphate (GGPP). Condensation of indole-3-glycerol phosphate with GGPP by the prenyl transferase ptmC then forms 3-geranylgeranylindole (3-GGI). Epoxidation by the FAD-dependent monooxygenase ptmM leads to a epoxidized-GGI that is substrate of the terpene cyclase ptmB for cyclization to yield paspaline. Paspaline is subsequently converted to 13-desoxypaxilline by the cytochrome P450 monooxygenase ptmP, the latter being then converted to paxilline by the cytochrome P450 monooxygenase ptmQ. Paxilline is converted to beta-paxitriol via C-10 ketoreduction by the short-chain dehydrogenase ptmH which can be monoprenylated at the C-20 by the indole diterpene prenyltransferase ptmD. A two-step elimination (acetylation and elimination) process performed by the O-acetyltransferase ptmV and ptmI leads to the production of the prenylated form of penijanthine. The FAD-linked oxidoreductase ptmO then converts the prenylated form of penijanthine into PC-M5 which is in turn transformed into PC-M4 by the aromatic dimethylallyltransferase ptmE. Five sequential oxidative transformations performed by the cytochrome P450 monooxygenases ptmK, ptmU, ptmL, ptmN and ptmJ yield the various penitrem compounds. PtmK, ptmU and ptmM are involved in the formation of the key bicyclic ring of penitrem C via the formation of the intermediates secopenitrem D and penitrem D. PtmL catalyzes the epoxidation of penitrem D and C to yield penitrem B and F, respectively. PtmJ catalyzes the last benzylic hydroxylation to convert penitrem B to prenitrem E and penitrem F to penitrem A. The chain is Cytochrome P450 monooxygenase ptmK from Penicillium ochrochloron.